The chain runs to 504 residues: UDP-N-acetylglucosamine--peptide N-acetylglucosaminyltransferase GtfA subunit (504 aa).

A UDP-binding site is contributed by 16-19; sequence GVEY. His243 is a binding site for N-acetyl-D-glucosamine. 385 to 386 lines the UDP pocket; sequence HK. Residue 405–408 coordinates N-acetyl-D-glucosamine; it reads EGFG.

Belongs to the glycosyltransferase group 1 family. Glycosyltransferase 4 subfamily. As to quaternary structure, interacts with stabilizing protein GtfB (Gtf1), probably via the N-terminus of this protein; probably forms a heterotetramer with 2 subunits each of GtfA and GtfB. Part of the accessory SecA2/SecY2 protein translocation apparatus.

The protein resides in the cytoplasm. It localises to the cell membrane. The catalysed reaction is L-seryl-[protein] + UDP-N-acetyl-alpha-D-glucosamine = 3-O-[N-acetyl-alpha-D-glucosaminyl]-L-seryl-[protein] + UDP + H(+). The protein operates within protein modification; protein glycosylation. Its function is as follows. Required for polymorphic O-glycosylation of serine-rich repeat protein Fap1. Catalyzes the first step in glycosylation by transferring N-acetylglucosamine from UDP-GlcNAc to serine residues in Fap1. Part of the accessory SecA2/SecY2 system specifically required to export Fap1, a serine-rich fimbrial adhesin encoded upstream in the same operon. The GtfA-GtfB (Gtf1-Gtf2 in this bacteria) complex adds GlcNAc from UDP-GlcNAc to Fap1, attaching the first sugar residue. Cannot use not UDP-Glc as substrate. This subunit has very low glycosyltransferase activity; the GtfB stabilizing protein enhances membrane association, protease resistance and glycosyltransferase activity. The protein is UDP-N-acetylglucosamine--peptide N-acetylglucosaminyltransferase GtfA subunit of Streptococcus parasanguinis.